The chain runs to 372 residues: Aminomethyltransferase (372 aa).

The protein belongs to the GcvT family. The glycine cleavage system is composed of four proteins: P, T, L and H.

It catalyses the reaction N(6)-[(R)-S(8)-aminomethyldihydrolipoyl]-L-lysyl-[protein] + (6S)-5,6,7,8-tetrahydrofolate = N(6)-[(R)-dihydrolipoyl]-L-lysyl-[protein] + (6R)-5,10-methylene-5,6,7,8-tetrahydrofolate + NH4(+). Functionally, the glycine cleavage system catalyzes the degradation of glycine. The polypeptide is Aminomethyltransferase (Prochlorococcus marinus (strain NATL1A)).